The chain runs to 322 residues: MAKSKTKHRLCSRESSVSSLLASCSLSDSNSSNSDGSYHYKDKLYRSASQALQAYIDDFDLSQMYPGTSTGKINIDEDFTNMSQFCNYIYKPNNAFENLDHKKHSNFISCRRQTINDIDSMSLTTDDLLRLPADGSFSYTYVGPSHRTNKKNKKCHGRLGSSDVEKNPNFQGPSTPVGDKIELLILKAKRNLEQCTEELPKSMKKDDSPCSLDKLEAERSWENIPVTFKSPIPVNSDDSPQQTSRAKSATGVLEDFLNNDNQSCTLSGGKHHGPVEALKQMLFNLQAVQERFNQNKATEPKEEIKQVSEDDFSKLQLKERQF.

A signal peptide spans 1–31 (MAKSKTKHRLCSRESSVSSLLASCSLSDSNS). Residues 148–157 (TNKKNKKCHG) show a composition bias toward basic residues. Disordered stretches follow at residues 148–175 (TNKK…GPST) and 228–248 (FKSP…RAKS). Residue Ser161 is modified to Phosphoserine. A compositionally biased stretch (polar residues) spans 236–247 (SDDSPQQTSRAK).

Its subcellular location is the secreted. Its function is as follows. Might play a role in cell proliferation. The protein is Lung adenoma susceptibility protein 2 homolog (LAS2) of Macaca fascicularis (Crab-eating macaque).